The following is a 236-amino-acid chain: 2,3,4,5-tetrahydropyridine-2,6-dicarboxylate N-acetyltransferase (236 aa).

Belongs to the transferase hexapeptide repeat family. DapH subfamily.

It carries out the reaction (S)-2,3,4,5-tetrahydrodipicolinate + acetyl-CoA + H2O = L-2-acetamido-6-oxoheptanedioate + CoA. The protein operates within amino-acid biosynthesis; L-lysine biosynthesis via DAP pathway; LL-2,6-diaminopimelate from (S)-tetrahydrodipicolinate (acetylase route): step 1/3. Its function is as follows. Catalyzes the transfer of an acetyl group from acetyl-CoA to tetrahydrodipicolinate. The sequence is that of 2,3,4,5-tetrahydropyridine-2,6-dicarboxylate N-acetyltransferase from Bacillus velezensis (strain DSM 23117 / BGSC 10A6 / LMG 26770 / FZB42) (Bacillus amyloliquefaciens subsp. plantarum).